The following is a 141-amino-acid chain: Nucleoside diphosphate kinase (141 aa).

ATP contacts are provided by Lys-11, Phe-59, Arg-87, Thr-93, Arg-104, and Asn-114. His-117 serves as the catalytic Pros-phosphohistidine intermediate.

It belongs to the NDK family. Homotetramer. It depends on Mg(2+) as a cofactor.

The protein resides in the cytoplasm. The enzyme catalyses a 2'-deoxyribonucleoside 5'-diphosphate + ATP = a 2'-deoxyribonucleoside 5'-triphosphate + ADP. It catalyses the reaction a ribonucleoside 5'-diphosphate + ATP = a ribonucleoside 5'-triphosphate + ADP. Major role in the synthesis of nucleoside triphosphates other than ATP. The ATP gamma phosphate is transferred to the NDP beta phosphate via a ping-pong mechanism, using a phosphorylated active-site intermediate. This is Nucleoside diphosphate kinase from Vibrio parahaemolyticus serotype O3:K6 (strain RIMD 2210633).